The sequence spans 146 residues: Putative pre-16S rRNA nuclease (146 aa).

The protein belongs to the YqgF nuclease family.

The protein localises to the cytoplasm. Functionally, could be a nuclease involved in processing of the 5'-end of pre-16S rRNA. This Paraburkholderia phytofirmans (strain DSM 17436 / LMG 22146 / PsJN) (Burkholderia phytofirmans) protein is Putative pre-16S rRNA nuclease.